The chain runs to 194 residues: Casparian strip membrane protein 2 (194 aa).

The Cytoplasmic portion of the chain corresponds to 1-32 (MSTTIDIPESSKVVKGKGVVAAPLRPGGWKKG). The chain crosses the membrane as a helical span at residues 33-53 (VAIMDFILRLGAIAAALGAAA). At 54-82 (TMGTSDQTLPFFTQFFQFEASYDSFTTFQ) the chain is on the extracellular side. A helical transmembrane segment spans residues 83-103 (FFVITMALVGGYLVLSLPFSV). Residues 104–115 (VAIIRPHAVGPR) lie on the Cytoplasmic side of the membrane. The helical transmembrane segment at 116 to 136 (LFLIILDTVFLTLATASAASA) threads the bilayer. Residues 137 to 168 (AAVVYLAHNGDQDTNWLAICNQFGDFCAQTSS) lie on the Extracellular side of the membrane. Residues 169 to 189 (AVVSSFVAVVVFVLLIVMSAL) form a helical membrane-spanning segment. Residues 190–194 (AMGKP) are Cytoplasmic-facing.

It belongs to the Casparian strip membrane proteins (CASP) family. In terms of assembly, homodimer and heterodimers.

The protein localises to the cell membrane. Its function is as follows. Regulates membrane-cell wall junctions and localized cell wall deposition. Required for establishment of the Casparian strip membrane domain (CSD) and the subsequent formation of Casparian strips, a cell wall modification of the root endodermis that determines an apoplastic barrier between the intraorganismal apoplasm and the extraorganismal apoplasm and prevents lateral diffusion. The sequence is that of Casparian strip membrane protein 2 from Vigna unguiculata (Cowpea).